Here is a 427-residue protein sequence, read N- to C-terminus: Glutamate-1-semialdehyde 2,1-aminomutase 1 (427 aa).

At Lys267 the chain carries N6-(pyridoxal phosphate)lysine.

Belongs to the class-III pyridoxal-phosphate-dependent aminotransferase family. HemL subfamily. In terms of assembly, homodimer. Requires pyridoxal 5'-phosphate as cofactor.

The protein localises to the cytoplasm. The catalysed reaction is (S)-4-amino-5-oxopentanoate = 5-aminolevulinate. It participates in porphyrin-containing compound metabolism; protoporphyrin-IX biosynthesis; 5-aminolevulinate from L-glutamyl-tRNA(Glu): step 2/2. The chain is Glutamate-1-semialdehyde 2,1-aminomutase 1 from Macrococcus caseolyticus (strain JCSC5402) (Macrococcoides caseolyticum).